Here is a 506-residue protein sequence, read N- to C-terminus: Aldehyde dehydrogenase [NAD(P)+] 1 (506 aa).

Residue glutamate 268 is the Proton acceptor of the active site. Residue cysteine 302 is the Nucleophile of the active site.

This sequence belongs to the aldehyde dehydrogenase family.

It localises to the cytoplasm. It carries out the reaction an aldehyde + NAD(+) + H2O = a carboxylate + NADH + 2 H(+). The catalysed reaction is 3-aminopropanal + NAD(+) + H2O = beta-alanine + NADH + 2 H(+). Its function is as follows. Cytoplasmic aldehyde dehydrogenase involved in ethanol oxidation. Required for pantothenic acid production through the conversion of 3-aminopropanal to beta-alanine, an intermediate in pantothenic acid (vitamin B5) and coenzyme A (CoA) biosynthesis. This is Aldehyde dehydrogenase [NAD(P)+] 1 (ALD2) from Saccharomyces cerevisiae (strain ATCC 204508 / S288c) (Baker's yeast).